A 599-amino-acid polypeptide reads, in one-letter code: Elongation factor 4 (599 aa).

In terms of domain architecture, tr-type G spans 2–184 (KNIRNFSIIA…RLVRDIPPPQ (183 aa)). Residues 14 to 19 (DHGKST) and 131 to 134 (NKID) contribute to the GTP site.

This sequence belongs to the TRAFAC class translation factor GTPase superfamily. Classic translation factor GTPase family. LepA subfamily.

It localises to the cell inner membrane. It catalyses the reaction GTP + H2O = GDP + phosphate + H(+). Required for accurate and efficient protein synthesis under certain stress conditions. May act as a fidelity factor of the translation reaction, by catalyzing a one-codon backward translocation of tRNAs on improperly translocated ribosomes. Back-translocation proceeds from a post-translocation (POST) complex to a pre-translocation (PRE) complex, thus giving elongation factor G a second chance to translocate the tRNAs correctly. Binds to ribosomes in a GTP-dependent manner. The chain is Elongation factor 4 from Salmonella paratyphi A (strain ATCC 9150 / SARB42).